Reading from the N-terminus, the 321-residue chain is Peroxidase 27 (321 aa).

An N-terminal signal peptide occupies residues 1–23 (MAASKRLVVSCLFLVLLFAQANS). Disulfide bonds link C35/C113, C68/C73, C119/C317, and C196/C228. The active-site Proton acceptor is H66. D67, V70, G72, D74, and S76 together coordinate Ca(2+). P159 lines the substrate pocket. Residue N164 is glycosylated (N-linked (GlcNAc...) asparagine). H189 is a binding site for heme b. T190 lines the Ca(2+) pocket. N205 carries an N-linked (GlcNAc...) asparagine glycan. Residues D240, S243, and D248 each contribute to the Ca(2+) site.

Belongs to the peroxidase family. Classical plant (class III) peroxidase subfamily. Heme b serves as cofactor. The cofactor is Ca(2+). As to expression, expressed in the whole plant, but preferentially in roots and flowers.

Its subcellular location is the secreted. It carries out the reaction 2 a phenolic donor + H2O2 = 2 a phenolic radical donor + 2 H2O. In terms of biological role, removal of H(2)O(2), oxidation of toxic reductants, biosynthesis and degradation of lignin, suberization, auxin catabolism, response to environmental stresses such as wounding, pathogen attack and oxidative stress. These functions might be dependent on each isozyme/isoform in each plant tissue. The sequence is that of Peroxidase 27 (PER27) from Arabidopsis thaliana (Mouse-ear cress).